The sequence spans 302 residues: Surfeit locus protein 4 homolog (302 aa).

6 helical membrane passes run 95–115 (APLL…LVVF), 120–140 (AYAI…YGLI), 193–213 (VLLI…ISWT), 215–235 (ILVH…FKAK), 236–256 (FFAA…NSFW), and 271–291 (DFFQ…TGPG). The Di-lysine motif signature appears at 299 to 302 (KKIY).

It belongs to the SURF4 family.

The protein resides in the endoplasmic reticulum membrane. In Schizosaccharomyces pombe (strain 972 / ATCC 24843) (Fission yeast), this protein is Surfeit locus protein 4 homolog.